Here is a 556-residue protein sequence, read N- to C-terminus: Glutamine--tRNA ligase (556 aa).

A 'HIGH' region motif is present at residues 34-44 (PEPNGYLHIGH). ATP contacts are provided by residues 35 to 37 (EPN) and 41 to 47 (HIGHAKS). 2 residues coordinate L-glutamine: D67 and Y212. ATP is bound by residues T231, 261–262 (RL), and 269–271 (MSK). Residues 268–272 (VMSKR) carry the 'KMSKS' region motif.

This sequence belongs to the class-I aminoacyl-tRNA synthetase family. As to quaternary structure, monomer.

It is found in the cytoplasm. The enzyme catalyses tRNA(Gln) + L-glutamine + ATP = L-glutaminyl-tRNA(Gln) + AMP + diphosphate. The protein is Glutamine--tRNA ligase of Vibrio campbellii (strain ATCC BAA-1116).